The chain runs to 318 residues: MQWVEVEVLTTAEAVEAVAVILEDYGATGVVIEDSADLTRKWEDRYGEIYALDPANYPASGVRVRAYLPVVSWQEERAGEIQTRVKALAAVGLDPGAATVRYRLAREEEWAYGWQKYYHPVRVTKGLTIKPTWEEYTPSPGETVIEIDPGMAFGTGTHPTTILSLQALERVLKPGARVVDVGCGTGILALAAAKMGAGAVLALDLDPVAVAVARKNIARNGAADKVTVRNNDLLAGLEGPFDLVVANILAEVILKMIPDAGRVLPAGGTLIASGISRGKAGVVEDALLANGFAVEDTLTSGEWVTFIVRNLLPDPVEC.

Positions 161, 182, 204, and 247 each coordinate S-adenosyl-L-methionine.

This sequence belongs to the methyltransferase superfamily. PrmA family.

The protein localises to the cytoplasm. It catalyses the reaction L-lysyl-[protein] + 3 S-adenosyl-L-methionine = N(6),N(6),N(6)-trimethyl-L-lysyl-[protein] + 3 S-adenosyl-L-homocysteine + 3 H(+). Functionally, methylates ribosomal protein L11. This Moorella thermoacetica (strain ATCC 39073 / JCM 9320) protein is Ribosomal protein L11 methyltransferase.